Here is a 192-residue protein sequence, read N- to C-terminus: uncharacterized protein (192 aa).

Disordered regions lie at residues 1 to 37 (MASSCPGTPSPAGLPPPSVATPGETLGPAAPPEPAFP) and 146 to 192 (ARGP…EQNK). Composition is skewed to pro residues over residues 8–19 (TPSPAGLPPPSV) and 159–180 (APPPPSRSPRPALPATAPPGWP).

This is an uncharacterized protein from Homo sapiens (Human).